The following is a 69-amino-acid chain: Neurotoxin Cex3 (69 aa).

A1 is a signal peptide. The region spanning 2–67 (KDGYLVNKST…TYPLPNKSCG (66 aa)) is the LCN-type CS-alpha/beta domain. Cystine bridges form between C13/C66, C17/C42, C26/C47, and C30/C49. Position 66 is a cysteine amide (C66). Residues 67–69 (GRK) constitute a propeptide that is removed on maturation.

It belongs to the long (4 C-C) scorpion toxin superfamily. Sodium channel inhibitor family. Beta subfamily. Expressed by the venom gland.

The protein localises to the secreted. In terms of biological role, beta toxins bind voltage-independently at site-4 of sodium channels (Nav) and shift the voltage of activation toward more negative potentials thereby affecting sodium channel activation and promoting spontaneous and repetitive firing. The sequence is that of Neurotoxin Cex3 from Centruroides exilicauda (Bark scorpion).